Here is a 118-residue protein sequence, read N- to C-terminus: Holo-[acyl-carrier-protein] synthase (118 aa).

Mg(2+) is bound by residues aspartate 8 and glutamate 58.

The protein belongs to the P-Pant transferase superfamily. AcpS family. The cofactor is Mg(2+).

The protein resides in the cytoplasm. It carries out the reaction apo-[ACP] + CoA = holo-[ACP] + adenosine 3',5'-bisphosphate + H(+). Functionally, transfers the 4'-phosphopantetheine moiety from coenzyme A to a Ser of acyl-carrier-protein. The protein is Holo-[acyl-carrier-protein] synthase of Listeria welshimeri serovar 6b (strain ATCC 35897 / DSM 20650 / CCUG 15529 / CIP 8149 / NCTC 11857 / SLCC 5334 / V8).